The sequence spans 235 residues: Small ribosomal subunit protein eS4 (235 aa).

Residues Ile43 to Glu114 form the S4 RNA-binding domain.

It belongs to the eukaryotic ribosomal protein eS4 family.

The chain is Small ribosomal subunit protein eS4 from Korarchaeum cryptofilum (strain OPF8).